The primary structure comprises 175 residues: Regenerating islet-derived protein 3-gamma (175 aa).

The N-terminal stretch at 1–26 (MLPPMALPSVSWMLLSCLILLCQVQG) is a signal peptide. Positions 27–37 (EETQKELPSPR) are excised as a propeptide. Cystine bridges form between Cys40–Cys51, Cys68–Cys171, and Cys146–Cys163. The 126-residue stretch at 47–172 (YGSPCYALFL…CDAKLPYVCK (126 aa)) folds into the C-type lectin domain. The sufficient to activate EXTL3 stretch occupies residues 103 to 118 (WIGLHDPTQGSEPDGD). A Zn(2+)-binding site is contributed by His107. Residues 114-116 (EPD) carry the EPN motif. The Zn(2+) site is built by Glu121 and His145.

As to quaternary structure, forms a hexameric membrane-permeabilizing oligomeric pore on membrane phospholipids. The hexamer is formed by three dimers related by helical symmetry. Forms filaments, filamentation traps pore complexes and limits damage to host cells. Interacts with EXTL3. In terms of processing, proteolytic processing by trypsin removes an inhibitory N-terminal propeptide and is essential for peptidoglycan binding and antibacterial activity. Predominantly expressed in pancreas, where it may be restricted to exocrine pancreas. Moderate expression levels in testis and weak in heart, kidney and placenta.

Its subcellular location is the secreted. The protein resides in the cytoplasm. With respect to regulation, lipopolysaccharide inhibits pore-forming activity, explaining why is bactericidal for Gram-positive but not Gram-negative bacteria. Functionally, bactericidal C-type lectin which acts exclusively against Gram-positive bacteria and mediates bacterial killing by binding to surface-exposed carbohydrate moieties of peptidoglycan. Restricts bacterial colonization of the intestinal epithelial surface and consequently limits activation of adaptive immune responses by the microbiota. In terms of biological role, acts as a hormone in response to different stimuli like anti-inflammatory signals, such as IL17A, or gut microbiome. Is secreted by different cell types to activate its receptor EXTL3 and induce cell specific signaling pathways. Induced by IL17A in keratinocytes, regulates keratinocyte proliferation and differentiation after skin injury. In parallel, inhibits skin inflammation through the inhibition of inflammatory cytokines such as IL6 and TNF. Induced by IL22 in lung epithelial cells, inhibits cytokine production and regulates allergic airway inflammation. Induced in small intestine by inulin-enriched diet and Lactobacillus gasseri enriched microbiome, plays a role in the improvement of gut barrier function, the regulation of energy balance and glucose levels. Modulates microbiota composition in duodenal contents. Produced by nociceptor in response to endotoxins, prevents endotoxic death by targeting kynurenine pathway in microglia. Has bacteriostatic activity. Its function is as follows. Has bactericidal activity against L.monocytogenes and methicillin-resistant S.aureus. This is Regenerating islet-derived protein 3-gamma from Homo sapiens (Human).